A 467-amino-acid polypeptide reads, in one-letter code: ATP synthase subunit beta (467 aa).

150 to 157 contributes to the ATP binding site; that stretch reads GGAGVGKT.

Belongs to the ATPase alpha/beta chains family. As to quaternary structure, F-type ATPases have 2 components, CF(1) - the catalytic core - and CF(0) - the membrane proton channel. CF(1) has five subunits: alpha(3), beta(3), gamma(1), delta(1), epsilon(1). CF(0) has three main subunits: a(1), b(2) and c(9-12). The alpha and beta chains form an alternating ring which encloses part of the gamma chain. CF(1) is attached to CF(0) by a central stalk formed by the gamma and epsilon chains, while a peripheral stalk is formed by the delta and b chains.

Its subcellular location is the cell inner membrane. It catalyses the reaction ATP + H2O + 4 H(+)(in) = ADP + phosphate + 5 H(+)(out). Produces ATP from ADP in the presence of a proton gradient across the membrane. The catalytic sites are hosted primarily by the beta subunits. This is ATP synthase subunit beta from Aliivibrio fischeri (strain ATCC 700601 / ES114) (Vibrio fischeri).